We begin with the raw amino-acid sequence, 347 residues long: Ribosomal RNA large subunit methyltransferase M (347 aa).

S-adenosyl-L-methionine is bound by residues S184, 217 to 220, D236, D256, and D272; that span reads APGG. Catalysis depends on K301, which acts as the Proton acceptor.

This sequence belongs to the class I-like SAM-binding methyltransferase superfamily. RNA methyltransferase RlmE family. RlmM subfamily. In terms of assembly, monomer.

The protein resides in the cytoplasm. The enzyme catalyses cytidine(2498) in 23S rRNA + S-adenosyl-L-methionine = 2'-O-methylcytidine(2498) in 23S rRNA + S-adenosyl-L-homocysteine + H(+). Catalyzes the 2'-O-methylation at nucleotide C2498 in 23S rRNA. This is Ribosomal RNA large subunit methyltransferase M from Xanthomonas campestris pv. campestris (strain 8004).